A 312-amino-acid polypeptide reads, in one-letter code: tRNA dimethylallyltransferase (312 aa).

ATP is bound at residue 11–18 (GPTAAGKS). Position 13 to 18 (13 to 18 (TAAGKS)) interacts with substrate. Interaction with substrate tRNA regions lie at residues 36–39 (DSAT), 160–164 (QRIQR), and 243–248 (RCVGYR).

Belongs to the IPP transferase family. In terms of assembly, monomer. Requires Mg(2+) as cofactor.

It catalyses the reaction adenosine(37) in tRNA + dimethylallyl diphosphate = N(6)-dimethylallyladenosine(37) in tRNA + diphosphate. Its function is as follows. Catalyzes the transfer of a dimethylallyl group onto the adenine at position 37 in tRNAs that read codons beginning with uridine, leading to the formation of N6-(dimethylallyl)adenosine (i(6)A). This is tRNA dimethylallyltransferase from Bordetella avium (strain 197N).